The sequence spans 302 residues: MGDVMNIDSIISRLLEVRGARPGKNVQLSEGEIRGLCLKSREIFLSQPILLELEAPLKICGDIHGQYYDLLRLFEYGGFPPESNYLFLGDYVDRGKQSLETICLLLAYKIKYSENFFLLRGNHECASINRIYGFYDECKRRYSIKLWKTFTDCFNCLPVAAIVDEKIFCCHGGLSPDLTSMEQIRRIMRPTDVPDQGLLCDLLWSDPDKDTMGWGENDRGVSFTFGAEVVAKFLQKHEFDLICRAHQVVEDGYEFFAKRMLVTLFSAPNYCGEFDNAGAMMSVDDTLMCSFQILKPADKRKK.

Aspartate 62, histidine 64, aspartate 90, and asparagine 122 together coordinate Mn(2+). Catalysis depends on histidine 123, which acts as the Proton donor. Residues histidine 171 and histidine 246 each coordinate Mn(2+).

Belongs to the PPP phosphatase family. PP-1 subfamily. As to quaternary structure, interacts with Nop17l. Interacts with uri; uri inhibits Pp1-87B phosphatase activity. Interacts with Rif1. Requires Mn(2+) as cofactor.

The protein resides in the cytoplasm. It catalyses the reaction O-phospho-L-seryl-[protein] + H2O = L-seryl-[protein] + phosphate. The catalysed reaction is O-phospho-L-threonyl-[protein] + H2O = L-threonyl-[protein] + phosphate. Is essential for the regulation of mitotic chromosomal segregation as well as regulation of chromatin condensation during interphase. This Drosophila melanogaster (Fruit fly) protein is Serine/threonine-protein phosphatase alpha-2 isoform (Pp1-87B).